The sequence spans 312 residues: Olfactory receptor 2H2 (312 aa).

The Extracellular segment spans residues 1 to 23 (MVNQSSTPGFLLLGFSEHPGLER). A glycan (N-linked (GlcNAc...) asparagine) is linked at Asn-3. Residues 24 to 47 (TLFVVVLTSYLLTLVGNTLIILLS) traverse the membrane as a helical segment. Topologically, residues 48-55 (ALDPKLHS) are cytoplasmic. Residues 56-77 (PMYFFLSNLSFLDLCFTTSCVP) form a helical membrane-spanning segment. Residues 78-98 (QMLVNLWGPKKTISFLDCSVQ) are Extracellular-facing. The cysteines at positions 95 and 187 are disulfide-linked. The helical transmembrane segment at 99–118 (IFIFLSLGTTECILLTVMAF) threads the bilayer. The Cytoplasmic segment spans residues 119 to 137 (DRYVAVCQPLHYATIIHPR). The helical transmembrane segment at 138-156 (LCWQLASVAWVIGLVESVV) threads the bilayer. The Extracellular portion of the chain corresponds to 157–193 (QTPSTLHLPFCPDRQVDDFVCEVPALIRLSCEDTSYN). A helical membrane pass occupies residues 194-217 (EIQVAVASVFILVVPLSLILVSYG). The Cytoplasmic segment spans residues 218 to 234 (AITWAVLRINSAKGRRK). The chain crosses the membrane as a helical span at residues 235 to 257 (AFGTCSSHLTVVTLFYSSVIAVY). Topologically, residues 258-270 (LQPKNPYAQERGK) are extracellular. The helical transmembrane segment at 271 to 290 (FFGLFYAVGTPSLNPLIYTL) threads the bilayer. At 291–312 (RNKEVTRAFRRLLGKEMGLTQS) the chain is on the cytoplasmic side.

The protein belongs to the G-protein coupled receptor 1 family.

It localises to the cell membrane. Functionally, odorant receptor. The chain is Olfactory receptor 2H2 (OR2H2) from Homo sapiens (Human).